The sequence spans 422 residues: UDP-N-acetylglucosamine 1-carboxyvinyltransferase (422 aa).

Position 22–23 (22–23) interacts with phosphoenolpyruvate; it reads KN. Arg93 contributes to the UDP-N-acetyl-alpha-D-glucosamine binding site. Cys117 functions as the Proton donor in the catalytic mechanism. Cys117 carries the 2-(S-cysteinyl)pyruvic acid O-phosphothioketal modification. UDP-N-acetyl-alpha-D-glucosamine-binding positions include 122-126, Asp308, and Ile330; that span reads RPVDL.

This sequence belongs to the EPSP synthase family. MurA subfamily.

The protein resides in the cytoplasm. The catalysed reaction is phosphoenolpyruvate + UDP-N-acetyl-alpha-D-glucosamine = UDP-N-acetyl-3-O-(1-carboxyvinyl)-alpha-D-glucosamine + phosphate. It functions in the pathway cell wall biogenesis; peptidoglycan biosynthesis. In terms of biological role, cell wall formation. Adds enolpyruvyl to UDP-N-acetylglucosamine. This Legionella pneumophila (strain Paris) protein is UDP-N-acetylglucosamine 1-carboxyvinyltransferase.